The following is a 100-amino-acid chain: MARGRVVCIGDAGCDCTPGVFRATAGGMPVLVVIESGTGGDQMARKATSPGKPAPTSGQYRPVGGGNEVTVPKGHRLPPSPKPGQKWVNVDPTKNKSGRG.

The disordered stretch occupies residues 40–100 (GDQMARKATS…DPTKNKSGRG (61 aa)).

This is an uncharacterized protein from Mycobacterium tuberculosis (strain ATCC 25618 / H37Rv).